The chain runs to 146 residues: 3-dehydroquinate dehydratase (146 aa).

The active-site Proton acceptor is the tyrosine 22. Substrate contacts are provided by asparagine 74, histidine 80, and aspartate 87. The Proton donor role is filled by histidine 100. Residues leucine 101–serine 102 and arginine 111 each bind substrate.

This sequence belongs to the type-II 3-dehydroquinase family. As to quaternary structure, homododecamer.

The enzyme catalyses 3-dehydroquinate = 3-dehydroshikimate + H2O. The protein operates within metabolic intermediate biosynthesis; chorismate biosynthesis; chorismate from D-erythrose 4-phosphate and phosphoenolpyruvate: step 3/7. Catalyzes a trans-dehydration via an enolate intermediate. The sequence is that of 3-dehydroquinate dehydratase from Clostridium beijerinckii (strain ATCC 51743 / NCIMB 8052) (Clostridium acetobutylicum).